A 283-amino-acid chain; its full sequence is Shikimate dehydrogenase (NADP(+)) (283 aa).

Shikimate contacts are provided by residues 16 to 18 and Thr-63; that span reads SLS. Lys-67 serves as the catalytic Proton acceptor. Asp-79 provides a ligand contact to NADP(+). Residues Asn-88 and Asp-103 each contribute to the shikimate site. Residues 128 to 132, Ala-223, and Gly-243 each bind NADP(+); that span reads GAGGA.

Belongs to the shikimate dehydrogenase family. Homodimer.

The enzyme catalyses shikimate + NADP(+) = 3-dehydroshikimate + NADPH + H(+). Its pathway is metabolic intermediate biosynthesis; chorismate biosynthesis; chorismate from D-erythrose 4-phosphate and phosphoenolpyruvate: step 4/7. Functionally, involved in the biosynthesis of the chorismate, which leads to the biosynthesis of aromatic amino acids. Catalyzes the reversible NADPH linked reduction of 3-dehydroshikimate (DHSA) to yield shikimate (SA). The chain is Shikimate dehydrogenase (NADP(+)) from Xanthomonas campestris pv. campestris (strain B100).